Here is an 833-residue protein sequence, read N- to C-terminus: CUB domain-containing protein 1 (833 aa).

An N-terminal signal peptide occupies residues 1–29 (MAHSACGFSVALLGALLLGTARLLRGTEA). Over 30–666 (SEIALPQRSG…VTLTPRTVDL (637 aa)) the chain is Extracellular. Residues Asn122, Asn180, Asn205, Asn270, Asn310, Asn342, and Asn386 are each glycosylated (N-linked (GlcNAc...) asparagine). Residues 417–540 (CLDHRYCYRQ…QGLIVSYTPY (124 aa)) form the CUB domain. Residues Cys476 and Cys499 are joined by a disulfide bond. A helical transmembrane segment spans residues 667 to 687 (AVVIGAAGGGALLLFALVLII). Residues 688 to 833 (CFVKKKKKVD…HTQGPVETEE (146 aa)) are Cytoplasmic-facing. Tyr731 is subject to Phosphotyrosine. The interval 783–833 (AKFTAEELAPSSPPESESEPYTFSHPNKGEIGVRETDIPLLHTQGPVETEE) is disordered. Over residues 809-819 (NKGEIGVRETD) the composition is skewed to basic and acidic residues.

In terms of assembly, interacts with CDH2/N-cadherin, CDH3/P-cadherin, SDC1/syndecan-1, SDC4/syndecan-4 and the serine protease ST14/MT-SP1. Also interacts SRC and PRKCG/protein kinase C gamma. Phosphorylated on tyrosine by kinases of the SRC family such as SRC and YES as well as by the protein kinase C gamma/PRKCG. Dephosphorylated by phosphotyrosine phosphatases. Also phosphorylated by suramin, a heparin analog. Tyrosine phosphorylated in response to dissociation of integrin alpha-6 beta-4 from laminin-5. In terms of processing, N-glycosylated. Post-translationally, a soluble form may also be produced by proteolytic cleavage at the cell surface (shedding). Another peptide of 80 kDa (p80) is present in cultured keratinocytes probably due to tryptic cleavage at an unidentified site on the N-terminal side. Converted to p80 by plasmin, a trypsin-like protease.

Its subcellular location is the cell membrane. Its function is as follows. May be involved in cell adhesion and cell matrix association. May play a role in the regulation of anchorage versus migration or proliferation versus differentiation via its phosphorylation. May be a novel marker for leukemia diagnosis and for immature hematopoietic stem cell subsets. Belongs to the tetraspanin web involved in tumor progression and metastasis. This chain is CUB domain-containing protein 1 (Cdcp1), found in Mus musculus (Mouse).